Here is a 156-residue protein sequence, read N- to C-terminus: Small ribosomal subunit protein uS7 (156 aa).

The protein belongs to the universal ribosomal protein uS7 family. In terms of assembly, part of the 30S ribosomal subunit. Contacts proteins S9 and S11.

Functionally, one of the primary rRNA binding proteins, it binds directly to 16S rRNA where it nucleates assembly of the head domain of the 30S subunit. Is located at the subunit interface close to the decoding center, probably blocks exit of the E-site tRNA. The sequence is that of Small ribosomal subunit protein uS7 from Campylobacter fetus subsp. fetus (strain 82-40).